Reading from the N-terminus, the 677-residue chain is DNA polymerase epsilon subunit B (677 aa).

The protein belongs to the DNA polymerase epsilon subunit B family. Heterotetramer. Consists of four subunits: POL2, DPB2, DPB3 and DPB4.

It localises to the nucleus. Functionally, as accessory component of the DNA polymerase epsilon (DNA polymerase II) participates in chromosomal DNA replication. The sequence is that of DNA polymerase epsilon subunit B (DPB2) from Eremothecium gossypii (strain ATCC 10895 / CBS 109.51 / FGSC 9923 / NRRL Y-1056) (Yeast).